The primary structure comprises 142 residues: Hemoglobin subunit alpha (142 aa).

In terms of domain architecture, Globin spans 2–142; the sequence is VLSDANKQEI…LVHQLSSKYR (141 aa). Residue His60 coordinates O2. His89 is a heme b binding site.

The protein belongs to the globin family. Heterotetramer of two alpha chains and two beta chains. In terms of tissue distribution, red blood cells.

In terms of biological role, involved in oxygen transport from gills to the various peripheral tissues. This chain is Hemoglobin subunit alpha (HBA), found in Bathyraja eatonii (Eaton's skate).